Consider the following 510-residue polypeptide: Major facilitator superfamily domain-containing protein 8 (510 aa).

Over 1 to 38 the chain is Cytoplasmic; that stretch reads MASIDDDDDERTPLLQDSHIGELVETQKQLKSRWWSIR. The short motif at 14 to 15 is the Dileucine internalization motif element; it reads LL. A helical transmembrane segment spans residues 39–59; that stretch reads VMYLTMFLSSVGFSIVMTSIW. Over 60–72 the chain is Extracellular; that stretch reads PYLQKVDQSADAS. A helical transmembrane segment spans residues 73 to 93; it reads FLGWVIASFSLGQMVASPLFG. Residues 94–103 lie on the Cytoplasmic side of the membrane; the sequence is LWSNHRPRRE. A helical transmembrane segment spans residues 104–124; it reads PLVVSITILVAASCLYAYVHV. Residues 125-132 lie on the Extracellular side of the membrane; that stretch reads PASHNKYY. Residues 133-155 form a helical membrane-spanning segment; that stretch reads MLLARTFVGFGSGNVAVVRSYVA. The Cytoplasmic portion of the chain corresponds to 156-171; the sequence is GATSLSERTGAMANIS. The chain crosses the membrane as a helical span at residues 172–192; it reads AFQAMGFILGPAFQAALSVIG. Topologically, residues 193–209 are extracellular; the sequence is ETGITINGISLQVNMYT. Residues 210 to 230 form a helical membrane-spanning segment; that stretch reads APALMGALLGIGNIILIFAIF. Over 231–264 the chain is Cytoplasmic; it reads REHRVDDLEKNVSSINSESEVTDVEKANEGPIDQ. The chain crosses the membrane as a helical span at residues 265–285; the sequence is IAVISSNILFFVVLFVFAIFE. The Extracellular segment spans residues 286–302; that stretch reads TISTPLTMDMYAWTRTQ. A helical transmembrane segment spans residues 303 to 323; sequence AVFYNGIILAAVGVESVIVFL. Over 324–335 the chain is Cytoplasmic; that stretch reads TVKILCKKTGER. The helical transmembrane segment at 336 to 356 threads the bilayer; that stretch reads VLLLGGLAVIWIGFFILLPWG. Over 357–406 the chain is Extracellular; sequence NQMPKIQWTDLQNATIHNTTQWTSSIPSSGNHSVEPTGCPVIQTWCLYTP. N-linked (GlcNAc...) asparagine glycosylation is found at Asn369 and Asn374. A helical membrane pass occupies residues 407-427; that stretch reads VIHLAQYLTSDILIGVGYPIC. The Cytoplasmic portion of the chain corresponds to 428–445; it reads NVMSYTLYSKIIGPKPQG. Residues 446-466 traverse the membrane as a helical segment; it reads LYMGWLTAAGSAARTLGPVFV. Residues 467–476 lie on the Extracellular side of the membrane; sequence SQIYTHLGTR. Residues 477–497 form a helical membrane-spanning segment; sequence WTFGIICAFVALSLLHLTAVY. At 498 to 510 the chain is on the cytoplasmic side; sequence KRLIPFSTRYERL.

This sequence belongs to the major facilitator superfamily.

The protein localises to the lysosome membrane. Functionally, may be a carrier that transport small solutes by using chemiosmotic ion gradients. The polypeptide is Major facilitator superfamily domain-containing protein 8 (mfsd8) (Xenopus laevis (African clawed frog)).